Reading from the N-terminus, the 330-residue chain is Ketol-acid reductoisomerase (NADP(+)) (330 aa).

A KARI N-terminal Rossmann domain is found at 1–182 (MKKVYYDQDA…GCTRAGVFET (182 aa)). NADP(+) contacts are provided by residues 25–28 (YGSQ), serine 51, serine 53, and 83–86 (DQIQ). Histidine 108 is an active-site residue. Glycine 134 contacts NADP(+). Residues 183–328 (TFKEETETDL…AELRQMMPWL (146 aa)) enclose the KARI C-terminal knotted domain. Positions 191, 195, 227, and 231 each coordinate Mg(2+). Serine 252 contributes to the substrate binding site.

This sequence belongs to the ketol-acid reductoisomerase family. Requires Mg(2+) as cofactor.

The enzyme catalyses (2R)-2,3-dihydroxy-3-methylbutanoate + NADP(+) = (2S)-2-acetolactate + NADPH + H(+). It carries out the reaction (2R,3R)-2,3-dihydroxy-3-methylpentanoate + NADP(+) = (S)-2-ethyl-2-hydroxy-3-oxobutanoate + NADPH + H(+). The protein operates within amino-acid biosynthesis; L-isoleucine biosynthesis; L-isoleucine from 2-oxobutanoate: step 2/4. It functions in the pathway amino-acid biosynthesis; L-valine biosynthesis; L-valine from pyruvate: step 2/4. In terms of biological role, involved in the biosynthesis of branched-chain amino acids (BCAA). Catalyzes an alkyl-migration followed by a ketol-acid reduction of (S)-2-acetolactate (S2AL) to yield (R)-2,3-dihydroxy-isovalerate. In the isomerase reaction, S2AL is rearranged via a Mg-dependent methyl migration to produce 3-hydroxy-3-methyl-2-ketobutyrate (HMKB). In the reductase reaction, this 2-ketoacid undergoes a metal-dependent reduction by NADPH to yield (R)-2,3-dihydroxy-isovalerate. This Carboxydothermus hydrogenoformans (strain ATCC BAA-161 / DSM 6008 / Z-2901) protein is Ketol-acid reductoisomerase (NADP(+)).